The following is a 270-amino-acid chain: ATP synthase subunit a (270 aa).

The next 5 helical transmembrane spans lie at 40–60 (IDSL…FYAV), 98–118 (IAPL…MDLV), 143–163 (DVNI…YYSI), 208–228 (LFGN…MLPW), and 239–259 (AIFH…LTIV).

Belongs to the ATPase A chain family. In terms of assembly, F-type ATPases have 2 components, CF(1) - the catalytic core - and CF(0) - the membrane proton channel. CF(1) has five subunits: alpha(3), beta(3), gamma(1), delta(1), epsilon(1). CF(0) has three main subunits: a(1), b(2) and c(9-12). The alpha and beta chains form an alternating ring which encloses part of the gamma chain. CF(1) is attached to CF(0) by a central stalk formed by the gamma and epsilon chains, while a peripheral stalk is formed by the delta and b chains.

It is found in the cell inner membrane. Key component of the proton channel; it plays a direct role in the translocation of protons across the membrane. The polypeptide is ATP synthase subunit a (Vibrio vulnificus (strain CMCP6)).